Consider the following 62-residue polypeptide: MDNRLLEILVCPLCKGTLQHDRANNELICHVDKLAYPIRDGIPVMLADEARQTVEGTPVDPA.

It belongs to the UPF0434 family.

The sequence is that of UPF0434 protein Rpic_2808 from Ralstonia pickettii (strain 12J).